The following is a 514-amino-acid chain: Putative fucosyltransferase 10 (514 aa).

N-linked (GlcNAc...) asparagine glycans are attached at residues asparagine 185, asparagine 210, asparagine 355, asparagine 377, and asparagine 456.

This sequence belongs to the glycosyltransferase 37 family. As to expression, expressed in root, leaves, stems and seedlings.

The protein localises to the golgi apparatus. The protein operates within protein modification; protein glycosylation. Its function is as follows. May be involved in cell wall biosynthesis. May act as a fucosyltransferase. The chain is Putative fucosyltransferase 10 (FUT10) from Arabidopsis thaliana (Mouse-ear cress).